Reading from the N-terminus, the 588-residue chain is Aspartate--tRNA ligase (588 aa).

Residue E177 participates in L-aspartate binding. The aspartate stretch occupies residues 201-204 (QLFK). R223 contacts L-aspartate. Residues 223–225 (RDE) and Q232 each bind ATP. H451 is an L-aspartate binding site. E485 serves as a coordination point for ATP. R492 is an L-aspartate binding site. Position 537-540 (537-540 (GLDR)) interacts with ATP.

The protein belongs to the class-II aminoacyl-tRNA synthetase family. Type 1 subfamily. As to quaternary structure, homodimer.

Its subcellular location is the cytoplasm. The catalysed reaction is tRNA(Asp) + L-aspartate + ATP = L-aspartyl-tRNA(Asp) + AMP + diphosphate. Its function is as follows. Catalyzes the attachment of L-aspartate to tRNA(Asp) in a two-step reaction: L-aspartate is first activated by ATP to form Asp-AMP and then transferred to the acceptor end of tRNA(Asp). This Staphylococcus epidermidis (strain ATCC 35984 / DSM 28319 / BCRC 17069 / CCUG 31568 / BM 3577 / RP62A) protein is Aspartate--tRNA ligase.